Consider the following 425-residue polypeptide: Enolase (425 aa).

Gln-163 contacts (2R)-2-phosphoglycerate. Glu-205 (proton donor) is an active-site residue. The Mg(2+) site is built by Asp-242, Glu-285, and Asp-312. (2R)-2-phosphoglycerate contacts are provided by Lys-337, Arg-366, Ser-367, and Lys-388. Lys-337 serves as the catalytic Proton acceptor.

The protein belongs to the enolase family. Requires Mg(2+) as cofactor.

It localises to the cytoplasm. It is found in the secreted. Its subcellular location is the cell surface. The catalysed reaction is (2R)-2-phosphoglycerate = phosphoenolpyruvate + H2O. It participates in carbohydrate degradation; glycolysis; pyruvate from D-glyceraldehyde 3-phosphate: step 4/5. Functionally, catalyzes the reversible conversion of 2-phosphoglycerate (2-PG) into phosphoenolpyruvate (PEP). It is essential for the degradation of carbohydrates via glycolysis. This Rhodospirillum rubrum (strain ATCC 11170 / ATH 1.1.1 / DSM 467 / LMG 4362 / NCIMB 8255 / S1) protein is Enolase.